The chain runs to 412 residues: NADH-quinone oxidoreductase subunit D (412 aa).

The protein belongs to the complex I 49 kDa subunit family. As to quaternary structure, NDH-1 is composed of at least 14 different subunits, Nqo1 to Nqo14. The complex has a L-shaped structure, with the hydrophobic arm (subunits Nqo7, Nqo8, Nqo10 to Nqo14) embedded in the inner membrane and the hydrophilic peripheral arm (subunits Nqo1 to Nqo6, Nqo9) protruding into the bacterial cytoplasm. The hydrophilic domain contains all the redox centers. NADH-quinone oxidoreductase forms a supercomplex with ubiquinol-cytochrome c reductase complex (complex III or cytochrome b-c1 complex) and cytochrome c oxidase (complex IV), which stabilizes the NADH-quinone oxidoreductase complex.

The protein localises to the cell inner membrane. The catalysed reaction is a quinone + NADH + 5 H(+)(in) = a quinol + NAD(+) + 4 H(+)(out). NDH-1 shuttles electrons from NADH, via FMN and iron-sulfur (Fe-S) centers, to quinones in the respiratory chain. The immediate electron acceptor for the enzyme in this species is believed to be ubiquinone. Couples the redox reaction to proton translocation (for every two electrons transferred, four hydrogen ions are translocated across the cytoplasmic membrane), and thus conserves the redox energy in a proton gradient. This is NADH-quinone oxidoreductase subunit D (nuoD) from Paracoccus denitrificans (strain Pd 1222).